A 643-amino-acid polypeptide reads, in one-letter code: 1-deoxy-D-xylulose-5-phosphate synthase (643 aa).

Residues His72 and 113 to 115 contribute to the thiamine diphosphate site; that span reads GHA. Asp144 is a Mg(2+) binding site. Residues 145–146, Asn174, Tyr287, and Glu370 contribute to the thiamine diphosphate site; that span reads GA. Asn174 provides a ligand contact to Mg(2+).

This sequence belongs to the transketolase family. DXPS subfamily. In terms of assembly, homodimer. Mg(2+) is required as a cofactor. Thiamine diphosphate serves as cofactor.

The catalysed reaction is D-glyceraldehyde 3-phosphate + pyruvate + H(+) = 1-deoxy-D-xylulose 5-phosphate + CO2. It functions in the pathway metabolic intermediate biosynthesis; 1-deoxy-D-xylulose 5-phosphate biosynthesis; 1-deoxy-D-xylulose 5-phosphate from D-glyceraldehyde 3-phosphate and pyruvate: step 1/1. Functionally, catalyzes the acyloin condensation reaction between C atoms 2 and 3 of pyruvate and glyceraldehyde 3-phosphate to yield 1-deoxy-D-xylulose-5-phosphate (DXP). This is 1-deoxy-D-xylulose-5-phosphate synthase from Parasynechococcus marenigrum (strain WH8102).